A 76-amino-acid chain; its full sequence is Omega-conotoxin-like TxO5 (76 aa).

Positions 1–22 (MKLTCMVIVAVLFLTAWTFVTA) are cleaved as a signal peptide. A propeptide spanning residues 23 to 50 (ITSNGLENLFPNAHHEMKNPEASKLNKR) is cleaved from the precursor. Disulfide bonds link C51–C66, C58–C70, and C65–C75.

It belongs to the conotoxin O1 superfamily. Expressed by the venom duct.

The protein localises to the secreted. In terms of biological role, omega-conotoxins act at presynaptic membranes, they bind and block voltage-gated calcium channels (Cav). This chain is Omega-conotoxin-like TxO5 (TXO5), found in Conus textile (Cloth-of-gold cone).